Consider the following 181-residue polypeptide: Adenine phosphoribosyltransferase (181 aa).

The protein belongs to the purine/pyrimidine phosphoribosyltransferase family. As to quaternary structure, homodimer.

The protein resides in the cytoplasm. The catalysed reaction is AMP + diphosphate = 5-phospho-alpha-D-ribose 1-diphosphate + adenine. It participates in purine metabolism; AMP biosynthesis via salvage pathway; AMP from adenine: step 1/1. In terms of biological role, catalyzes a salvage reaction resulting in the formation of AMP, that is energically less costly than de novo synthesis. In Vibrio atlanticus (strain LGP32) (Vibrio splendidus (strain Mel32)), this protein is Adenine phosphoribosyltransferase.